Consider the following 305-residue polypeptide: tRNA-cytidine(32) 2-sulfurtransferase (305 aa).

Residues 1–20 (MTAVLPLPHPLADPAPRDPR) are disordered. The PP-loop motif signature appears at 59 to 64 (SGGKDS). [4Fe-4S] cluster is bound by residues Cys-134, Cys-137, and Cys-225. The span at 282 to 293 (DAPPDLAPDPGA) shows a compositional bias: low complexity. Positions 282-305 (DAPPDLAPDPGAWLTASDATHDSD) are disordered.

Belongs to the TtcA family. Homodimer. Mg(2+) is required as a cofactor. [4Fe-4S] cluster serves as cofactor.

It is found in the cytoplasm. The catalysed reaction is cytidine(32) in tRNA + S-sulfanyl-L-cysteinyl-[cysteine desulfurase] + AH2 + ATP = 2-thiocytidine(32) in tRNA + L-cysteinyl-[cysteine desulfurase] + A + AMP + diphosphate + H(+). It participates in tRNA modification. Catalyzes the ATP-dependent 2-thiolation of cytidine in position 32 of tRNA, to form 2-thiocytidine (s(2)C32). The sulfur atoms are provided by the cysteine/cysteine desulfurase (IscS) system. The chain is tRNA-cytidine(32) 2-sulfurtransferase from Xanthomonas oryzae pv. oryzae (strain PXO99A).